A 458-amino-acid chain; its full sequence is UDP-N-acetylglucosamine 1-carboxyvinyltransferase (458 aa).

Residue 34 to 35 (KN) participates in phosphoenolpyruvate binding. Arg-104 contributes to the UDP-N-acetyl-alpha-D-glucosamine binding site. The active-site Proton donor is the Cys-128. Cys-128 is subject to 2-(S-cysteinyl)pyruvic acid O-phosphothioketal. UDP-N-acetyl-alpha-D-glucosamine contacts are provided by Asp-320 and Val-342.

This sequence belongs to the EPSP synthase family. MurA subfamily.

The protein localises to the cytoplasm. The enzyme catalyses phosphoenolpyruvate + UDP-N-acetyl-alpha-D-glucosamine = UDP-N-acetyl-3-O-(1-carboxyvinyl)-alpha-D-glucosamine + phosphate. It participates in cell wall biogenesis; peptidoglycan biosynthesis. Functionally, cell wall formation. Adds enolpyruvyl to UDP-N-acetylglucosamine. This is UDP-N-acetylglucosamine 1-carboxyvinyltransferase from Prochlorococcus marinus (strain NATL2A).